Here is a 168-residue protein sequence, read N- to C-terminus: Lipoprotein signal peptidase (168 aa).

Helical transmembrane passes span 15 to 35 (WLWLAILVFIADIGIKLVVMD), 47 to 67 (VLPFFNLLYVHNYGAAFSFLS), 75 to 95 (WLFTGIAFVVTGLLTYWMSKL), and 107 to 127 (ALIIGGAVGNVFDRVVHGFVV). Catalysis depends on residues Asp128 and Asp146. Residues 141–161 (AFNLADTTICIGAAMIILDGF) traverse the membrane as a helical segment.

Belongs to the peptidase A8 family.

It localises to the cell inner membrane. The enzyme catalyses Release of signal peptides from bacterial membrane prolipoproteins. Hydrolyzes -Xaa-Yaa-Zaa-|-(S,diacylglyceryl)Cys-, in which Xaa is hydrophobic (preferably Leu), and Yaa (Ala or Ser) and Zaa (Gly or Ala) have small, neutral side chains.. It functions in the pathway protein modification; lipoprotein biosynthesis (signal peptide cleavage). Functionally, this protein specifically catalyzes the removal of signal peptides from prolipoproteins. The sequence is that of Lipoprotein signal peptidase from Vibrio campbellii (strain ATCC BAA-1116).